Consider the following 114-residue polypeptide: UPF0102 protein jhp_0762 (114 aa).

Belongs to the UPF0102 family.

The polypeptide is UPF0102 protein jhp_0762 (Helicobacter pylori (strain J99 / ATCC 700824) (Campylobacter pylori J99)).